The following is a 393-amino-acid chain: Major outer membrane protein P.IA (393 aa).

The N-terminal stretch at 1 to 19 (MRKKLTALVLSALPLAAVA) is a signal peptide.

This sequence belongs to the Gram-negative porin family. Homotrimer.

The protein localises to the cell outer membrane. Serves as a slightly cation selective porin. Major antigen on the gonococcal cell surface and it may have pathogenic properties in addition to its porin activity. The protein is Major outer membrane protein P.IA (porA) of Neisseria meningitidis serogroup C.